The sequence spans 127 residues: Mu-like prophage FluMu protein gp41 (127 aa).

The segment at 107–127 is disordered; sequence VSRGRLDTADQETGKDLSAVS. A compositionally biased stretch (basic and acidic residues) spans 110–121; the sequence is GRLDTADQETGK.

This sequence to phage Mu protein gp41.

The polypeptide is Mu-like prophage FluMu protein gp41 (Haemophilus influenzae (strain ATCC 51907 / DSM 11121 / KW20 / Rd)).